The following is a 594-amino-acid chain: DNA mismatch repair protein MutL (594 aa).

This sequence belongs to the DNA mismatch repair MutL/HexB family.

This protein is involved in the repair of mismatches in DNA. It is required for dam-dependent methyl-directed DNA mismatch repair. May act as a 'molecular matchmaker', a protein that promotes the formation of a stable complex between two or more DNA-binding proteins in an ATP-dependent manner without itself being part of a final effector complex. The chain is DNA mismatch repair protein MutL from Tolumonas auensis (strain DSM 9187 / NBRC 110442 / TA 4).